The sequence spans 642 residues: Threonine--tRNA ligase (642 aa).

One can recognise a TGS domain in the interval 1–61 (MPVITLPDGS…DTDSELSIIT (61 aa)). The segment at 243-534 (DHRKIGKQLD…LIEEYAGKFP (292 aa)) is catalytic. Zn(2+) is bound by residues Cys-334, His-385, and His-511.

Belongs to the class-II aminoacyl-tRNA synthetase family. Homodimer. The cofactor is Zn(2+).

The protein resides in the cytoplasm. It catalyses the reaction tRNA(Thr) + L-threonine + ATP = L-threonyl-tRNA(Thr) + AMP + diphosphate + H(+). Its function is as follows. Catalyzes the attachment of threonine to tRNA(Thr) in a two-step reaction: L-threonine is first activated by ATP to form Thr-AMP and then transferred to the acceptor end of tRNA(Thr). Also edits incorrectly charged L-seryl-tRNA(Thr). The protein is Threonine--tRNA ligase of Shewanella sediminis (strain HAW-EB3).